We begin with the raw amino-acid sequence, 453 residues long: Cysteine desulfurase, mitochondrial (453 aa).

Residues M1–T34 constitute a mitochondrion transit peptide. Pyridoxal 5'-phosphate contacts are provided by residues A123 to T124, N203, Q231, and S251 to H253. K254 bears the N6-(pyridoxal phosphate)lysine mark. T291 serves as a coordination point for pyridoxal 5'-phosphate. The active-site Cysteine persulfide intermediate is C377. Residue C377 coordinates [2Fe-2S] cluster.

Belongs to the class-V pyridoxal-phosphate-dependent aminotransferase family. NifS/IscS subfamily. Interacts with FH. Interacts with SUFE1. The cofactor is pyridoxal 5'-phosphate.

It localises to the mitochondrion. The catalysed reaction is (sulfur carrier)-H + L-cysteine = (sulfur carrier)-SH + L-alanine. Threefold increase in the catalytic activity in the presence of FH (frataxin). 30-fold increase in the catalytic activity in the presence of SUFE1. Functionally, catalyzes the removal of elemental sulfur from cysteine to produce alanine. Supplies the inorganic sulfur for iron-sulfur (Fe-S) clusters. The sequence is that of Cysteine desulfurase, mitochondrial from Arabidopsis thaliana (Mouse-ear cress).